A 550-amino-acid chain; its full sequence is Aspartate--tRNA ligase (550 aa).

Glu-162 is a binding site for L-aspartate. The interval 186–189 (QIYK) is aspartate. Arg-208 serves as a coordination point for L-aspartate. ATP is bound by residues 208-210 (RDE) and Gln-217. His-417 serves as a coordination point for L-aspartate. Position 451 (Glu-451) interacts with ATP. L-aspartate is bound at residue Arg-458. 499-502 (GIDR) contacts ATP.

Belongs to the class-II aminoacyl-tRNA synthetase family. Type 1 subfamily. As to quaternary structure, homodimer.

The protein resides in the cytoplasm. It catalyses the reaction tRNA(Asp) + L-aspartate + ATP = L-aspartyl-tRNA(Asp) + AMP + diphosphate. In terms of biological role, catalyzes the attachment of L-aspartate to tRNA(Asp) in a two-step reaction: L-aspartate is first activated by ATP to form Asp-AMP and then transferred to the acceptor end of tRNA(Asp). The polypeptide is Aspartate--tRNA ligase (Mycoplasma genitalium (strain ATCC 33530 / DSM 19775 / NCTC 10195 / G37) (Mycoplasmoides genitalium)).